A 550-amino-acid chain; its full sequence is Solute carrier family 22 member 6 (550 aa).

Over 1–9 (MAFNDLLQQ) the chain is Cytoplasmic. The chain crosses the membrane as a helical span at residues 10-30 (VGGVGRFQQIQVTLVVLPLLL). Residues 31–135 (MASHNTVQNF…LVCSHRALRQ (105 aa)) lie on the Extracellular side of the membrane. N-linked (GlcNAc...) asparagine glycosylation is found at Asn56, Asn92, and Asn113. The helical transmembrane segment at 136–156 (LAQSLYMVGVLLGAMVFGYLA) threads the bilayer. Over 157–164 (DRLGRRKV) the chain is Cytoplasmic. A helical transmembrane segment spans residues 165–187 (LILNYLQTAVSGTCAAFAPNFPI). Residues 188–190 (YCA) lie on the Extracellular side of the membrane. A helical membrane pass occupies residues 191-213 (FRLLSGMSLAGIALNCMTLNVEW). The Cytoplasmic segment spans residues 214–224 (MPIHTRACVGT). The helical transmembrane segment at 225 to 245 (LIGYVYSLGQFLLAGVAYAVP) threads the bilayer. Residues 246–248 (HWR) are Extracellular-facing. The helical transmembrane segment at 249 to 269 (HLQLLISVPFFAFFIYSWFFI) threads the bilayer. The Cytoplasmic segment spans residues 270–337 (ESARWHSSSG…ELLRCPTLRH (68 aa)). Residues 338 to 358 (LFLCLSMLWFATSFAYYGLVM) traverse the membrane as a helical segment. Over 359–368 (DLQGFGVSIY) the chain is Extracellular. A helical transmembrane segment spans residues 369 to 389 (LIQVIFGAVDLPAKLVGFLVI). The Cytoplasmic segment spans residues 390–395 (NSLGRR). Residues 396 to 416 (PAQMAALLLAGICILLNGVVP) traverse the membrane as a helical segment. The Extracellular portion of the chain corresponds to 417–425 (QDQSVIRTS). The helical transmembrane segment at 426-446 (LAVLGKGCLAASFNCIFLYTG) threads the bilayer. Residues 447–456 (ELYPTMIRQT) are Cytoplasmic-facing. A helical membrane pass occupies residues 457–477 (GLGMGSTMARVGSIVSPLVSM). At 478 to 484 (TTELYPS) the chain is on the extracellular side. A helical transmembrane segment spans residues 485-505 (VPLFIYGAVPVAASAVTVLLP). Topologically, residues 506-550 (ETLGQPLPDTVQDLESRKGKQTPQQQEHQKYMVPLQASAQEKNGL) are cytoplasmic. A disordered region spans residues 513-550 (PDTVQDLESRKGKQTPQQQEHQKYMVPLQASAQEKNGL).

It belongs to the major facilitator (TC 2.A.1) superfamily. Organic cation transporter (TC 2.A.1.19) family. Glycosylated. Glycosylation is necessary for proper targeting of the transporter to the plasma membrane. In terms of tissue distribution, expressed in kidney; in the basolateral membrane of the proximal tubule.

The protein localises to the basolateral cell membrane. It localises to the basal cell membrane. It carries out the reaction (6R)-L-erythro-5,6,7,8-tetrahydrobiopterin(out) + a dicarboxylate(in) = (6R)-L-erythro-5,6,7,8-tetrahydrobiopterin(in) + a dicarboxylate(out). The enzyme catalyses L-erythro-7,8-dihydrobiopterin(out) + a dicarboxylate(in) = L-erythro-7,8-dihydrobiopterin(in) + a dicarboxylate(out). It catalyses the reaction L-sepiapterin(out) + a dicarboxylate(in) = L-sepiapterin(in) + a dicarboxylate(out). The catalysed reaction is prostaglandin F2alpha(out) + a dicarboxylate(in) = prostaglandin F2alpha(in) + a dicarboxylate(out). It carries out the reaction prostaglandin E2(out) + a dicarboxylate(in) = prostaglandin E2(in) + a dicarboxylate(out). The enzyme catalyses 3',5'-cyclic AMP(out) + a dicarboxylate(in) = 3',5'-cyclic AMP(in) + a dicarboxylate(out). It catalyses the reaction 3',5'-cyclic GMP(out) + a dicarboxylate(in) = 3',5'-cyclic GMP(in) + a dicarboxylate(out). The catalysed reaction is urate(out) + a dicarboxylate(in) = urate(in) + a dicarboxylate(out). It carries out the reaction kynurenate(out) + glutarate(in) = kynurenate(in) + glutarate(out). The enzyme catalyses (indol-3-yl)acetate(out) + a dicarboxylate(in) = (indol-3-yl)acetate(in) + a dicarboxylate(out). It catalyses the reaction indoxyl sulfate(out) + a dicarboxylate(in) = indoxyl sulfate(in) + a dicarboxylate(out). The catalysed reaction is N-benzoylglycine(out) + a dicarboxylate(in) = N-benzoylglycine(in) + a dicarboxylate(out). It carries out the reaction 3-carboxy-4-methyl-5-propyl-2-furanpropanoate(out) + a dicarboxylate(in) = 3-carboxy-4-methyl-5-propyl-2-furanpropanoate(in) + a dicarboxylate(out). Its function is as follows. Secondary active transporter that functions as a Na(+)-independent organic anion (OA)/dicarboxylate antiporter where the uptake of one molecule of OA into the cell is coupled with an efflux of one molecule of intracellular dicarboxylate such as 2-oxoglutarate or glutarate. Mediates the uptake of OA across the basolateral side of proximal tubule epithelial cells, thereby contributing to the renal elimination of endogenous OA from the systemic circulation into the urine. Functions as a biopterin transporters involved in the uptake and the secretion of coenzymes tetrahydrobiopterin (BH4), dihydrobiopterin (BH2) and sepiapterin to urine, thereby determining baseline levels of blood biopterins. Transports prostaglandin E2 (PGE2) and prostaglandin F2-alpha (PGF2-alpha) and may contribute to their renal excretion. Also mediates the uptake of cyclic nucleotides such as cAMP and cGMP. Involved in the transport of neuroactive tryptophan metabolites kynurenate (KYNA) and xanthurenate (XA) and may contribute to their secretion from the brain. May transport glutamate. Also involved in the disposition of uremic toxins and potentially toxic xenobiotics by the renal organic anion secretory pathway, helping reduce their undesired toxicological effects on the body. Uremic toxins include the indoxyl sulfate (IS), hippurate/N-benzoylglycine (HA), indole acetate (IA), 3-carboxy-4- methyl-5-propyl-2-furanpropionate (CMPF) and urate. Xenobiotics include the mycotoxin ochratoxin (OTA). May also contribute to the transport of organic compounds in testes across the blood-testis-barrier. This chain is Solute carrier family 22 member 6, found in Macaca fascicularis (Crab-eating macaque).